We begin with the raw amino-acid sequence, 44 residues long: Thymosin beta-12 (44 aa).

Basic and acidic residues-rich tracts occupy residues 1 to 25 (MSDK…ETQE) and 33 to 44 (ETIEQEKAAATS). The disordered stretch occupies residues 1–44 (MSDKPDISEVTSFDKTKLKKTETQEKNPLPSKETIEQEKAAATS). Position 2 is an N-acetylserine (Ser2).

The protein belongs to the thymosin beta family.

It is found in the cytoplasm. It localises to the cytoskeleton. Plays an important role in the organization of the cytoskeleton. Binds to and sequesters actin monomers (G actin) and therefore inhibits actin polymerization. The protein is Thymosin beta-12 of Lateolabrax japonicus (Japanese sea perch).